A 207-amino-acid chain; its full sequence is Outer-membrane lipoprotein LolB (207 aa).

The signal sequence occupies residues 1–23 (MINLRRFTKFTLAGLTALSLLGG). Cysteine 24 carries N-palmitoyl cysteine lipidation. Residue cysteine 24 is the site of S-diacylglycerol cysteine attachment.

Belongs to the LolB family. In terms of assembly, monomer.

Its subcellular location is the cell outer membrane. In terms of biological role, plays a critical role in the incorporation of lipoproteins in the outer membrane after they are released by the LolA protein. This is Outer-membrane lipoprotein LolB from Shewanella amazonensis (strain ATCC BAA-1098 / SB2B).